The primary structure comprises 302 residues: Myb-related protein Hv33 (302 aa).

HTH myb-type domains follow at residues 11-63 (QPKV…INYL) and 64-118 (RPDL…KKKL). DNA-binding regions (H-T-H motif) lie at residues 39 to 63 (WSSVPRLAALNRCGKSCRLRWINYL) and 91 to 114 (WSQIASHLPGRTDNEIKNFWNSCI). Residues 137–158 (ATAAAALPDAEEEDRKPLCPAV) form a disordered region.

As to expression, germinating seed and apical meristem of shoot and root.

Its subcellular location is the nucleus. Functionally, possible transcription activator in response to an external signal. May be involved in the regulation of flavonoid biosynthesis. The polypeptide is Myb-related protein Hv33 (MYB2) (Hordeum vulgare (Barley)).